Consider the following 460-residue polypeptide: Metal cation symporter ZIP8 (460 aa).

Residues 1–22 (MAPGRAVAGLLLLAAAGLGGVA) form the signal peptide. Residues 23–132 (EGPGLAFSED…PSHSEVWGYG (110 aa)) lie on the Extracellular side of the membrane. Asn40 and Asn88 each carry an N-linked (GlcNAc...) asparagine glycan. The chain crosses the membrane as a helical span at residues 133–153 (FLSVTIINLASLLGLILTPLI). At 154–160 (KKSYFPK) the chain is on the cytoplasmic side. The helical transmembrane segment at 161 to 181 (ILTFFVGLAIGTLFSNAIFQL) threads the bilayer. At 182 to 191 (IPEAFGFDPK) the chain is on the extracellular side. A helical membrane pass occupies residues 192 to 212 (VDSYVEKAVAVFGGFYLLFFF). The Cytoplasmic segment spans residues 213–365 (ERMLKMLLKT…LNAGMSTRQA (153 aa)). The XEXPHE-motif signature appears at 343-348 (EEFPHE). Residues 366-386 (LLFNFLSACSCYVGLAFGILV) form a helical membrane-spanning segment. Residues 387–388 (GN) lie on the Extracellular side of the membrane. A helical membrane pass occupies residues 389 to 409 (NFAPNIIFALAGGMFLYISLA). The Cytoplasmic segment spans residues 410-429 (DMFPEMNDMLREKVTGRKTD). Residues 430 to 450 (FTFFMIQNAGMLTGFTAILLI) form a helical membrane-spanning segment. The Extracellular portion of the chain corresponds to 451–460 (TLYAGEIELE).

It belongs to the ZIP transporter (TC 2.A.5) family. As to quaternary structure, homodimer. In terms of processing, N-glycosylated. N-glycosylation is not required for proper iron and zinc transport. Ubiquitously expressed. Expressed in thymus, placenta, lung, liver, pancreas, salivary gland and, to a lower extent, in spleen, testis, ovary, small intestine, colon, leukocyte, heart. Highest expression is observed in pancreas. Expressed by macrophages (at protein level). Expressed by microvascular capillary endothelial cells that constitute the blood-brain barrier (at protein level).

It localises to the cell membrane. It is found in the lysosome membrane. The protein resides in the apical cell membrane. The protein localises to the basolateral cell membrane. The catalysed reaction is Zn(2+)(out) + 2 hydrogencarbonate(out) = Zn(2+)(in) + 2 hydrogencarbonate(in). It catalyses the reaction selenite(out) + Zn(2+)(out) + hydrogencarbonate(out) = selenite(in) + Zn(2+)(in) + hydrogencarbonate(in). It carries out the reaction Mn(2+)(out) + 2 hydrogencarbonate(out) = Mn(2+)(in) + 2 hydrogencarbonate(in). The enzyme catalyses Fe(2+)(out) + 2 hydrogencarbonate(out) = Fe(2+)(in) + 2 hydrogencarbonate(in). The catalysed reaction is Cd(2+)(out) + 2 hydrogencarbonate(out) = Cd(2+)(in) + 2 hydrogencarbonate(in). It catalyses the reaction Co(2+)(out) + 2 hydrogencarbonate(out) = Co(2+)(in) + 2 hydrogencarbonate(in). Functionally, electroneutral divalent metal cation:bicarbonate symporter of the plasma membrane mediating the cellular uptake of zinc and manganese, two divalent metal cations important for development, tissue homeostasis and immunity. Transports an electroneutral complex composed of a divalent metal cation and two bicarbonate anions or alternatively a bicarbonate and a selenite anion. Thereby, it also contributes to the cellular uptake of selenium, an essential trace metal and micronutrient. Also imports cadmium a non-essential metal which is cytotoxic and carcinogenic. May also transport iron and cobalt through membranes. Through zinc import, indirectly regulates the metal-dependent transcription factor MTF1 and the expression of some metalloproteases involved in cartilage catabolism and also probably heart development. Also indirectly regulates the expression of proteins involved in cell morphology and cytoskeleton organization. Indirectly controls innate immune function and inflammatory response by regulating zinc cellular uptake which in turn modulates the expression of genes specific of these processes. Protects, for instance, cells from injury and death at the onset of inflammation. By regulating zinc influx into monocytes also directly modulates their adhesion to endothelial cells and arteries. Reclaims manganese from the bile at the apical membrane of hepatocytes, thereby regulating the activity of the manganese-dependent enzymes through the systemic levels of the nutrient. Also participates in manganese reabsorption in the proximal tubule of the kidney. By mediating the extracellular uptake of manganese by cells of the blood-brain barrier, may also play a role in the transport of the micronutrient to the brain. With manganese cellular uptake also participates in mitochondrial proper function. Finally, also probably functions intracellularly, translocating zinc from lysosome to cytosol to indirectly enhance the expression of specific genes during TCR-mediated T cell activation. In Homo sapiens (Human), this protein is Metal cation symporter ZIP8.